Reading from the N-terminus, the 842-residue chain is Taste receptor type 1 member 1 (842 aa).

The signal sequence occupies residues 1 to 19; that stretch reads MLFWAAHLLLSLQLAVAYC. The Extracellular segment spans residues 20 to 568; it reads WAFSCQRTES…EFLGWHEPIS (549 aa). Residues N88, N89, N96, N136, N292, N480, and N530 are each glycosylated (N-linked (GlcNAc...) asparagine). The helical transmembrane segment at 569-589 threads the bilayer; it reads LVLLAANTLLLLLLIGTAGLF. At 590 to 604 the chain is on the cytoplasmic side; that stretch reads AWRLHTPVVRSAGGR. Residues 605 to 625 form a helical membrane-spanning segment; sequence LCFLMLGSLVAGSCSLYSFFG. Residues 626-640 are Extracellular-facing; sequence KPTVPACLLRQPLFS. A helical transmembrane segment spans residues 641–661; sequence LGFAIFLSCLTIRSFQLVIIF. Residues 662–681 are Cytoplasmic-facing; sequence KFSTKVPTFYHTWAQNHGAG. A helical transmembrane segment spans residues 682 to 702; that stretch reads IFVIVSSTVHLFLCLTWLAMW. Residues 703–725 lie on the Extracellular side of the membrane; it reads TPRPTREYQRFPHLVILECTEVN. Residues 726 to 746 form a helical membrane-spanning segment; that stretch reads SVGFLVAFAHNILLSISTFVC. The Cytoplasmic portion of the chain corresponds to 747–762; sequence SYLGKELPENYNEAKC. A helical transmembrane segment spans residues 763–783; that stretch reads VTFSLLLHFVSWIAFFTMSSI. The Extracellular segment spans residues 784–789; the sequence is YQGSYL. The chain crosses the membrane as a helical span at residues 790-810; sequence PAVNVLAGLATLSGGFSGYFL. At 811 to 842 the chain is on the cytoplasmic side; sequence PKCYVILCRPELNNTEHFQASIQDYTRRCGTT.

It belongs to the G-protein coupled receptor 3 family. TAS1R subfamily. In terms of assembly, forms heterodimers with TAS1R3. Expressed strongly only in fungiform papillae.

It localises to the cell membrane. Its function is as follows. Putative taste receptor. TAS1R1/TAS1R3 responds to the umami taste stimulus (the taste of monosodium glutamate) and also to most of the 20 standard L-amino acids, but not to their D-enantiomers or other compounds. Sequence differences within and between species can significantly influence the selectivity and specificity of taste responses. The sequence is that of Taste receptor type 1 member 1 (Tas1r1) from Mus musculus (Mouse).